A 171-amino-acid chain; its full sequence is Tetratricopeptide repeat protein 9C (171 aa).

3 TPR repeats span residues 8–41, 72–107, and 108–141; these read AQLYKEEGNQRYREGKYRDAVSRYHRALLQLRGL, TDCYNNLAACLLQMEPVNYERVREYSQKVLERQPDN, and AKALYRAGVAFFHLQDYDQARHYLLAAVNRQPKD.

It belongs to the TTC9 family.

This chain is Tetratricopeptide repeat protein 9C (TTC9C), found in Homo sapiens (Human).